We begin with the raw amino-acid sequence, 183 residues long: A-type ATP synthase subunit E (183 aa).

It belongs to the V-ATPase E subunit family. In terms of assembly, has multiple subunits with at least A(3), B(3), C, D, E, F, H, I and proteolipid K(x).

The protein resides in the cell membrane. Its function is as follows. Component of the A-type ATP synthase that produces ATP from ADP in the presence of a proton gradient across the membrane. This is A-type ATP synthase subunit E from Methanosarcina acetivorans (strain ATCC 35395 / DSM 2834 / JCM 12185 / C2A).